The sequence spans 657 residues: Pentatricopeptide repeat-containing protein CRR2, chloroplastic (657 aa).

The N-terminal 51 residues, 1-51, are a transit peptide targeting the chloroplast; it reads MFLSHPPQVIQPTYHTVNFLPRSPLKPPSCSVALNNPSISSGAGAKISNNQ. PPR repeat units follow at residues 45 to 75, 76 to 110, 111 to 141, 142 to 176, 177 to 215, 216 to 246, 247 to 277, 284 to 318, 319 to 349, 350 to 384, 385 to 420, and 421 to 451; these read AKISNNQLIQSLCKEGKLKQAIRVLSQESSP, SQQTYELLILCCGHRSSLSDALRVHRHILDNGSDQ, DPFLATKLIGMYSDLGSVDYARKVFDKTRKR, TIYVWNALFRALTLAGHGEEVLGLYWKMNRIGVES, DRFTYTYVLKACVASECTVNHLMKGKEIHAHLTRRGYSS, HVYIMTTLVDMYARFGCVDYASYVFGGMPVR, NVVSWSAMIACYAKNGKAFEALRTFREMMRE, NSVTMVSVLQACASLAALEQGKLIHGYILRRGLDS, ILPVISALVTMYGRCGKLEVGQRVFDRMHDR, DVVSWNSLISSYGVHGYGKKAIQIFEEMLANGASP, TPVTFVSVLGACSHEGLVEEGKRLFETMWRDHGIKP, and QIEHYACMVDLLGRANRLDEAAKMVQDMRTE. The segment at 456 to 531 is type E motif; the sequence is VWGSLLGSCR…LPGRCWMEVR (76 aa). A type E(+) motif region spans residues 532–562; sequence RKMYSFVSVDEFNPLMEQIHAFLVKLAEDMK. The type DYW motif stretch occupies residues 563–657; it reads EKGYIPQTKG…NGVCSCGDYW (95 aa).

Belongs to the PPR family. PCMP-H subfamily.

It localises to the plastid. The protein localises to the chloroplast. Functionally, required for the intergenic processing between chloroplast rsp7 and ndhB transcripts. Necessary for chloroplast NADH dehydrogenase-like (NDH) complex-dependent cyclic electron transport around PSI (CET). This Arabidopsis thaliana (Mouse-ear cress) protein is Pentatricopeptide repeat-containing protein CRR2, chloroplastic.